Here is a 279-residue protein sequence, read N- to C-terminus: Large ribosomal subunit protein uL2 (279 aa).

The interval 227–279 (GVAMNPVDHPMGGGEGKTSGGRHPVSPWGFPTKGKKTRDPNKLSSKFIKSKKR) is disordered.

The protein belongs to the universal ribosomal protein uL2 family. In terms of assembly, part of the 50S ribosomal subunit. Forms a bridge to the 30S subunit in the 70S ribosome.

Functionally, one of the primary rRNA binding proteins. Required for association of the 30S and 50S subunits to form the 70S ribosome, for tRNA binding and peptide bond formation. It has been suggested to have peptidyltransferase activity; this is somewhat controversial. Makes several contacts with the 16S rRNA in the 70S ribosome. The sequence is that of Large ribosomal subunit protein uL2 from Neorickettsia sennetsu (strain ATCC VR-367 / Miyayama) (Ehrlichia sennetsu).